The following is a 279-amino-acid chain: Polyamine aminopropyltransferase (279 aa).

The PABS domain maps to 4–237; sequence IEWYPRGYGV…SPWAFLVGIK (234 aa). Q29 contacts S-methyl-5'-thioadenosine. Residues H60 and D84 each coordinate spermidine. Residues E104 and 141 to 142 each bind S-methyl-5'-thioadenosine; that span reads DG. The active-site Proton acceptor is the D158. Spermidine is bound at residue 158 to 161; the sequence is DSTD. Residue P165 participates in S-methyl-5'-thioadenosine binding.

This sequence belongs to the spermidine/spermine synthase family. Homodimer or homotetramer.

It is found in the cytoplasm. It catalyses the reaction S-adenosyl 3-(methylsulfanyl)propylamine + putrescine = S-methyl-5'-thioadenosine + spermidine + H(+). It functions in the pathway amine and polyamine biosynthesis; spermidine biosynthesis; spermidine from putrescine: step 1/1. In terms of biological role, catalyzes the irreversible transfer of a propylamine group from the amino donor S-adenosylmethioninamine (decarboxy-AdoMet) to putrescine (1,4-diaminobutane) to yield spermidine. This chain is Polyamine aminopropyltransferase, found in Pyrococcus abyssi (strain GE5 / Orsay).